Here is a 759-residue protein sequence, read N- to C-terminus: Na(+)/H(+) exchanger beta (759 aa).

Over 1-14 (MPAFSCAFPGCRRD) the chain is Cytoplasmic. A helical membrane pass occupies residues 15–34 (LLVIVLVVFVGIGLPIEASA). The Extracellular segment spans residues 35 to 75 (PAYQSHGTEGSHLTNITNTKKAFPVLAVNYEHVRKPFEIAL). Asn-49 is a glycosylation site (N-linked (GlcNAc...) asparagine). Residues 76–95 (WILLALLMKLGFHLIPRLSA) traverse the membrane as a helical segment. Residues 96–97 (VV) are Cytoplasmic-facing. Residues 98–117 (PESCLLIVVGLLVGGLIKVI) form a helical membrane-spanning segment. The Extracellular segment spans residues 118-122 (GEEPP). Residues 123–142 (VLDSQLFFLCLLPPIILDAG) traverse the membrane as a helical segment. Residues 143-149 (YFLPIRP) are Cytoplasmic-facing. A helical membrane pass occupies residues 150-169 (FTENVGTILVFAVIGTLWNA). Residues 170-195 (FFMGGLLYALCQIESVGLSGVDLLAC) lie on the Extracellular side of the membrane. Residues 196–214 (LLFGSIVSAVDPVAVLAVF) form a helical membrane-spanning segment. At 215 to 225 (EEIHINELVHI) the chain is on the cytoplasmic side. The chain crosses the membrane as a helical span at residues 226–244 (LVFGESLLNDAVTVVLYNL). Over 245–261 (FEEFSKVGTVTVLDVFL) the chain is Extracellular. Residues 262–282 (GVVCFFVVSLGGVLVGAIYGF) form a helical membrane-spanning segment. The Cytoplasmic segment spans residues 283 to 311 (LAAFTSRFTSHTRVIEPLFVFLYSYMAYL). Residues 312-330 (SSEMFHLSGIMALIACGVV) form a helical membrane-spanning segment. At 331–352 (MRPYVEANISHKSYTTIKYFLK) the chain is on the extracellular side. N-linked (GlcNAc...) asparagine glycosylation occurs at Asn-338. Residues 353-372 (MWSSVSETLIFIFLGVSTVA) form a helical membrane-spanning segment. At 373–376 (GPHA) the chain is on the cytoplasmic side. The helical transmembrane segment at 377–398 (WNWTFVITTVILCLVSRVLGVI) threads the bilayer. Topologically, residues 399–446 (GLTFIINKFRIVKLTKKDQFIVAYGGLRGAIAFSLGYLLSNSHQMRNL) are extracellular. Residues 447-467 (FLTAIITVIFFTVFVQGMTIR) form a helical membrane-spanning segment. The Cytoplasmic portion of the chain corresponds to 468–759 (PLVELLAVKK…KEDDDPFMSC (292 aa)). Residues Ser-641 and Ser-648 each carry the phosphoserine; by PKA modification. The tract at residues 681-759 (FPTVHFEQPS…KEDDDPFMSC (79 aa)) is disordered. Positions 707 to 719 (VPKRPSLKADIEG) are enriched in basic and acidic residues.

Belongs to the monovalent cation:proton antiporter 1 (CPA1) transporter (TC 2.A.36) family. Post-translationally, activated by cAMP, protein kinase A and protein kinase C.

The protein localises to the basolateral cell membrane. In terms of biological role, involved in pH regulation to eliminate acids generated by active metabolism or to counter adverse environmental conditions. Major proton extruding system driven by the inward sodium ion chemical gradient. The protein is Na(+)/H(+) exchanger beta of Oncorhynchus mykiss (Rainbow trout).